We begin with the raw amino-acid sequence, 372 residues long: N-methyl-L-tryptophan oxidase (372 aa).

4 to 34 (DLIIIGSGSVGAAAGYYATRAGLNVLMTDAH) lines the FAD pocket. Cys308 is modified (S-8alpha-FAD cysteine).

The protein belongs to the MSOX/MTOX family. MTOX subfamily. As to quaternary structure, monomer. FAD is required as a cofactor.

It carries out the reaction N(alpha)-methyl-L-tryptophan + O2 + H2O = L-tryptophan + formaldehyde + H2O2. Its function is as follows. Catalyzes the oxidative demethylation of N-methyl-L-tryptophan. The sequence is that of N-methyl-L-tryptophan oxidase from Escherichia coli O127:H6 (strain E2348/69 / EPEC).